A 316-amino-acid polypeptide reads, in one-letter code: Membrane protein UL148 (316 aa).

The signal sequence occupies residues 1 to 20 (MLRLLFTLVLLALYGPSVDA). Residues 286–308 (FIVQYLNTLLITMMAAIWARVLI) form a helical membrane-spanning segment.

As to quaternary structure, interacts with host SEL1L.

It localises to the host endoplasmic reticulum membrane. In terms of biological role, chaperone protein that plays an important role in HCMV tropism. Cooperates with UL116 to regulate the abundance of gH-gL complexes in virion. Favors the incorporation of gL into virions once UL116 has regulated the early folding steps of virion assembly. Interacts with the host ERAD machinery and slows gO decay which would otherwise be constitutively degraded. Reorganizes the host endoplasmic reticulum and activates the unfolded protein response. Additionally, plays a role in the evasion of antiviral immune response by down-regulating cell surface expression of host CD58. Mechanistically, interacts with host CD58 and retains its immature form intracellularly. The capacity to cause endoplasmic reticulum reorganization and the intracellular retention of host CD58 are functionally independent properties. This is Membrane protein UL148 (UL148) from Human cytomegalovirus (strain Merlin) (HHV-5).